Consider the following 185-residue polypeptide: Adenine phosphoribosyltransferase (185 aa).

It belongs to the purine/pyrimidine phosphoribosyltransferase family.

Its subcellular location is the cytoplasm. It carries out the reaction AMP + diphosphate = 5-phospho-alpha-D-ribose 1-diphosphate + adenine. It functions in the pathway purine metabolism; AMP biosynthesis via salvage pathway; AMP from adenine: step 1/1. In terms of biological role, catalyzes a salvage reaction resulting in the formation of AMP, that is energically less costly than de novo synthesis. This is Adenine phosphoribosyltransferase (aprt-1) from Caenorhabditis elegans.